The chain runs to 439 residues: Nuclear factor 1 C-type (439 aa).

M1 carries the post-translational modification N-acetylmethionine. Positions 1 to 195 (MYSSPLCLTQ…ERDAEQSSSP (195 aa)) form a DNA-binding region, CTF/NF-I. Residues S194 and S294 each carry the phosphoserine modification. Residues 265-348 (AGMRRTLPST…SPQDSPRLSS (84 aa)) are disordered. Over residues 299–312 (YYTSPNSPTSSSRN) the composition is skewed to low complexity. Y300 bears the Phosphotyrosine mark. S302, S305, S323, S333, S337, S339, and S343 each carry phosphoserine. Residues 334–348 (PFNSPSPQDSPRLSS) show a composition bias toward polar residues. R365 bears the Asymmetric dimethylarginine; alternate mark. An Omega-N-methylarginine; alternate modification is found at R365. R395 is subject to Asymmetric dimethylarginine. A 9aaTAD motif is present at residues 404–412 (DPLKDLVSL). The tract at residues 415–439 (DPATQQPGPPALRPTRPLQTVPLWD) is disordered.

Belongs to the CTF/NF-I family. Binds DNA as a homodimer. In terms of tissue distribution, highest levels in skeletal muscle. Lower levels in heart, liver, kidney, lung and brain. Very low levels in testis and spleen.

The protein resides in the nucleus. In terms of biological role, recognizes and binds the palindromic sequence 5'-TTGGCNNNNNGCCAA-3' present in viral and cellular promoters and in the origin of replication of adenovirus type 2. These proteins are individually capable of activating transcription and replication. This is Nuclear factor 1 C-type (Nfic) from Mus musculus (Mouse).